The sequence spans 416 residues: Isocitrate dehydrogenase [NADP] (416 aa).

NADP(+)-binding positions include 77-79 and arginine 84; that span reads TIT. Threonine 79 lines the substrate pocket. Substrate contacts are provided by residues 96–102, arginine 111, and arginine 134; that span reads SPNGTIR. Aspartate 254 is a Mn(2+) binding site. Lysine 262 is a binding site for NADP(+). Aspartate 277 lines the Mn(2+) pocket. Residues 312-317 and asparagine 330 contribute to the NADP(+) site; that span reads GTVTRH.

Belongs to the isocitrate and isopropylmalate dehydrogenases family. Heterodimer. Mg(2+) is required as a cofactor. The cofactor is Mn(2+).

It is found in the cytoplasm. The catalysed reaction is D-threo-isocitrate + NADP(+) = 2-oxoglutarate + CO2 + NADPH. May supply 2-oxoglutarate for amino acid biosynthesis and ammonia assimilation via the glutamine synthetase/glutamate synthase (GS/GOGAT) pathway. The protein is Isocitrate dehydrogenase [NADP] (ICDH-1) of Solanum tuberosum (Potato).